The following is a 382-amino-acid chain: Alanine racemase 1 (382 aa).

The Proton acceptor; specific for D-alanine role is filled by lysine 39. Lysine 39 carries the N6-(pyridoxal phosphate)lysine modification. Arginine 138 lines the substrate pocket. Residue tyrosine 265 is the Proton acceptor; specific for L-alanine of the active site. Methionine 312 contacts substrate.

It belongs to the alanine racemase family. Pyridoxal 5'-phosphate serves as cofactor.

It catalyses the reaction L-alanine = D-alanine. The protein operates within amino-acid biosynthesis; D-alanine biosynthesis; D-alanine from L-alanine: step 1/1. In terms of biological role, catalyzes the interconversion of L-alanine and D-alanine. May also act on other amino acids. This is Alanine racemase 1 (alr1) from Staphylococcus aureus (strain MRSA252).